The following is a 300-amino-acid chain: ESX-5 secretion-associated protein EspG5 (300 aa).

This sequence belongs to the EspG family. As to quaternary structure, interacts specifically with ESX-5-dependent PE/PPE proteins. Binds PPE33 and PPE18. Does not interact with EsxN. Monomer in solution.

The protein resides in the cytoplasm. Its function is as follows. Specific chaperone for cognate PE/PPE proteins. Plays an important role in preventing aggregation of PE/PPE dimers. Required for LipY and PE31/PPE18 secretion. The polypeptide is ESX-5 secretion-associated protein EspG5 (Mycobacterium marinum (strain ATCC BAA-535 / M)).